Here is a 92-residue protein sequence, read N- to C-terminus: Small ribosomal subunit protein uS19c (92 aa).

Belongs to the universal ribosomal protein uS19 family.

The protein resides in the plastid. Its subcellular location is the chloroplast. Its function is as follows. Protein S19 forms a complex with S13 that binds strongly to the 16S ribosomal RNA. This chain is Small ribosomal subunit protein uS19c, found in Rhodomonas salina (Cryptomonas salina).